We begin with the raw amino-acid sequence, 378 residues long: Glutamate 5-kinase (378 aa).

Lys19 provides a ligand contact to ATP. Substrate-binding residues include Ser59, Asp146, and Asn158. 178-179 (TD) lines the ATP pocket. The 79-residue stretch at 285 to 363 (RGSVAVDAGA…SEFERLLGYT (79 aa)) folds into the PUA domain.

This sequence belongs to the glutamate 5-kinase family.

The protein resides in the cytoplasm. It carries out the reaction L-glutamate + ATP = L-glutamyl 5-phosphate + ADP. Its pathway is amino-acid biosynthesis; L-proline biosynthesis; L-glutamate 5-semialdehyde from L-glutamate: step 1/2. Its function is as follows. Catalyzes the transfer of a phosphate group to glutamate to form L-glutamate 5-phosphate. The protein is Glutamate 5-kinase of Polaromonas sp. (strain JS666 / ATCC BAA-500).